We begin with the raw amino-acid sequence, 491 residues long: Argininosuccinate lyase (491 aa).

It belongs to the lyase 1 family. Argininosuccinate lyase subfamily.

Its subcellular location is the cytoplasm. It catalyses the reaction 2-(N(omega)-L-arginino)succinate = fumarate + L-arginine. Its pathway is amino-acid biosynthesis; L-arginine biosynthesis; L-arginine from L-ornithine and carbamoyl phosphate: step 3/3. The chain is Argininosuccinate lyase from Methanosarcina barkeri (strain Fusaro / DSM 804).